A 439-amino-acid polypeptide reads, in one-letter code: Xylose isomerase (439 aa).

Active-site residues include histidine 101 and aspartate 104. Residues glutamate 232, glutamate 268, histidine 271, aspartate 296, aspartate 307, aspartate 309, and aspartate 339 each coordinate Mg(2+).

The protein belongs to the xylose isomerase family. As to quaternary structure, homotetramer. Mg(2+) is required as a cofactor.

It is found in the cytoplasm. The enzyme catalyses alpha-D-xylose = alpha-D-xylulofuranose. The sequence is that of Xylose isomerase (xylA) from Thermoanaerobacterium thermosaccharolyticum (strain ATCC 7956 / DSM 571 / NCIMB 9385 / NCA 3814 / NCTC 13789 / WDCM 00135 / 2032) (Clostridium thermosaccharolyticum).